A 600-amino-acid polypeptide reads, in one-letter code: UvrABC system protein C (600 aa).

The region spanning 15-92 (DKPGCYLMKD…IKKYQPYYNV (78 aa)) is the GIY-YIG domain. One can recognise a UVR domain in the interval 197-232 (AQVKQDLTEKMTQASMDLEFERAAEIRDQLKYIEQT).

It belongs to the UvrC family. In terms of assembly, interacts with UvrB in an incision complex.

It localises to the cytoplasm. Functionally, the UvrABC repair system catalyzes the recognition and processing of DNA lesions. UvrC both incises the 5' and 3' sides of the lesion. The N-terminal half is responsible for the 3' incision and the C-terminal half is responsible for the 5' incision. In Lactobacillus johnsonii (strain CNCM I-12250 / La1 / NCC 533), this protein is UvrABC system protein C.